A 432-amino-acid polypeptide reads, in one-letter code: Asparagine--tRNA ligase (432 aa).

This sequence belongs to the class-II aminoacyl-tRNA synthetase family. In terms of assembly, homodimer.

The protein localises to the cytoplasm. It carries out the reaction tRNA(Asn) + L-asparagine + ATP = L-asparaginyl-tRNA(Asn) + AMP + diphosphate + H(+). The polypeptide is Asparagine--tRNA ligase (Lactobacillus johnsonii (strain CNCM I-12250 / La1 / NCC 533)).